The following is a 149-amino-acid chain: Calmodulin-6 (149 aa).

EF-hand domains lie at 8–43 (DQISEFKEAFSLFDKDGDGCITTKELGTVMRSLGQN), 44–79 (PTEAELQDMINEVDADGNGTIDFPEFLNLMARKMKD), 81–116 (DSEEELKEAFRVFDKDQNGFISAAELRHVMTNLGEK), and 117–149 (LSDEEVDEMIREADVDGDGQINYEEFVKVMMAK). Ca(2+) is bound by residues Asp-21, Asp-23, Asp-25, Cys-27, Glu-32, Asp-57, Asp-59, Asn-61, Thr-63, Glu-68, Asp-94, Asp-96, Asn-98, Glu-105, Asp-130, Asp-132, Asp-134, Gln-136, and Glu-141.

It belongs to the calmodulin family. Interacts with KCBP.

Calmodulin mediates the control of a large number of enzymes, ion channels and other proteins by Ca(2+). Among the enzymes to be stimulated by the calmodulin-Ca(2+) complex are a number of protein kinases and phosphatases. The sequence is that of Calmodulin-6 (CAM6) from Arabidopsis thaliana (Mouse-ear cress).